Reading from the N-terminus, the 122-residue chain is Histone H2B type 2-K1 (122 aa).

A disordered region spans residues 1-30 (MSAEYGQRQQPGGRGGRSSGNKKSKKRCRR). The segment covering 20 to 30 (GNKKSKKRCRR) has biased composition (basic residues). At Lys-31 the chain carries N6-(2-hydroxyisobutyryl)lysine; alternate. Position 31 is an N6-(beta-hydroxybutyryl)lysine; alternate (Lys-31). At Lys-31 the chain carries N6-crotonyllysine; alternate. Lys-31 carries the N6-glutaryllysine; alternate modification. An N6-succinyllysine; alternate modification is found at Lys-31. Lys-31 participates in a covalent cross-link: Glycyl lysine isopeptide (Lys-Gly) (interchain with G-Cter in ubiquitin); alternate. At Ser-33 the chain carries Phosphoserine. Lys-40, Lys-43, and Lys-54 each carry N6-(2-hydroxyisobutyryl)lysine; alternate. 2 positions are modified to N6-glutaryllysine; alternate: Lys-40 and Lys-43. Residue Lys-40 is modified to N6-lactoyllysine; alternate. Position 43 is an N6-methyllysine (Lys-43). Lys-43 bears the N6-methyllysine; alternate mark. N6,N6-dimethyllysine is present on Lys-54. At Lys-54 the chain carries N6,N6-dimethyllysine; alternate. Dimethylated arginine is present on Arg-76. Ser-81 bears the Phosphoserine mark. 2 positions are modified to omega-N-methylarginine: Arg-83 and Arg-89. Lys-105 bears the N6-(2-hydroxyisobutyryl)lysine; alternate mark. An N6-glutaryllysine; alternate modification is found at Lys-105. An N6-lactoyllysine; alternate modification is found at Lys-105. Position 105 is an N6-methyllysine (Lys-105). An N6-methyllysine; alternate modification is found at Lys-105. Ser-109 carries O-linked (GlcNAc) serine glycosylation. Thr-112 is modified (phosphothreonine). N6-(2-hydroxyisobutyryl)lysine; alternate is present on residues Lys-113 and Lys-117. An N6-(beta-hydroxybutyryl)lysine; alternate mark is found at Lys-113 and Lys-117. N6-glutaryllysine; alternate is present on residues Lys-113 and Lys-117. An N6-succinyllysine; alternate mark is found at Lys-113 and Lys-117. Lys-113 carries the N6-lactoyllysine; alternate modification. Lys-113 is subject to N6-malonyllysine; alternate. Lys-113 is subject to N6-methylated lysine; alternate. A Glycyl lysine isopeptide (Lys-Gly) (interchain with G-Cter in ubiquitin); alternate cross-link involves residue Lys-117.

This sequence belongs to the histone H2B family. The nucleosome is a histone octamer containing two molecules each of H2A, H2B, H3 and H4 assembled in one H3-H4 heterotetramer and two H2A-H2B heterodimers. The octamer wraps approximately 147 bp of DNA.

It is found in the chromosome. It localises to the nucleus. Core component of nucleosome. Nucleosomes wrap and compact DNA into chromatin, limiting DNA accessibility to the cellular machineries which require DNA as a template. Histones thereby play a central role in transcription regulation, DNA repair, DNA replication and chromosomal stability. DNA accessibility is regulated via a complex set of post-translational modifications of histones, also called histone code, and nucleosome remodeling. The chain is Histone H2B type 2-K1 from Homo sapiens (Human).